Here is a 164-residue protein sequence, read N- to C-terminus: CDP-archaeol synthase (164 aa).

The next 4 membrane-spanning stretches (helical) occupy residues 3-23 (LFVF…AVLA), 53-73 (GLAI…LLHP), 77-97 (LLDA…GAFI), and 126-146 (SLYA…TPII).

This sequence belongs to the CDP-archaeol synthase family. It depends on Mg(2+) as a cofactor.

It localises to the cell membrane. It catalyses the reaction 2,3-bis-O-(geranylgeranyl)-sn-glycerol 1-phosphate + CTP + H(+) = CDP-2,3-bis-O-(geranylgeranyl)-sn-glycerol + diphosphate. The protein operates within membrane lipid metabolism; glycerophospholipid metabolism. Its function is as follows. Catalyzes the formation of CDP-2,3-bis-(O-geranylgeranyl)-sn-glycerol (CDP-archaeol) from 2,3-bis-(O-geranylgeranyl)-sn-glycerol 1-phosphate (DGGGP) and CTP. This reaction is the third ether-bond-formation step in the biosynthesis of archaeal membrane lipids. This chain is CDP-archaeol synthase, found in Pyrobaculum arsenaticum (strain DSM 13514 / JCM 11321 / PZ6).